The sequence spans 435 residues: MSVKWERDSDAPKGTLTFDIDTETIQKGIDHAFTRTQKRISVPGFRKGHVPRTIFNQMYGEESLYQDALNDVLPDAYEAAIKEAGIEPVDQPQVNVESMEKGQPWTLTATVAVKPEVTLGDYKGMEVPEQDTSVSDADVDSELENKRQQQAELVLKEDEAAADGDTVVIDYEGSVDGEKFDGGSADNYSLVLGSGSFIPGFEDQLVGHKAGEDVDVNVTFPEDYHAKDLAGKDALFKVKIHEVKEKQLPELDDEFAKDVDEDVETLAELKDKVKKQLQDQKEAAAKAAIEDAAIEAAVANAETEEIPQAMLDDDTNRQLQQYLAGMQQQGINPQMYFQITNTTEDDLRKQFADDAAKRVKTNLVLEAVVKDANLNATDEDVQNEIADLAKQYGMDEEAVSKALTRDMLEHDIEIKKAVDLIADSAKQTAKAADKD.

The interval 125-147 (MEVPEQDTSVSDADVDSELENKR) is disordered. The region spanning 164–249 (GDTVVIDYEG…IHEVKEKQLP (86 aa)) is the PPIase FKBP-type domain.

The protein belongs to the FKBP-type PPIase family. Tig subfamily.

The protein resides in the cytoplasm. The catalysed reaction is [protein]-peptidylproline (omega=180) = [protein]-peptidylproline (omega=0). Functionally, involved in protein export. Acts as a chaperone by maintaining the newly synthesized protein in an open conformation. Functions as a peptidyl-prolyl cis-trans isomerase. The protein is Trigger factor of Limosilactobacillus fermentum (strain NBRC 3956 / LMG 18251) (Lactobacillus fermentum).